Consider the following 45-residue polypeptide: Myotoxin-2 (45 aa).

3 disulfide bridges follow: Cys4/Cys36, Cys11/Cys30, and Cys18/Cys37.

This sequence belongs to the crotamine-myotoxin family. Monomer. In terms of tissue distribution, expressed by the venom gland.

It localises to the secreted. Cationic peptide that possesses multiple functions. It acts as a cell-penetrating peptide (CPP), and as a potent voltage-gated potassium channel (Kv) inhibitor. It exhibits antimicrobial activities, hind limb paralysis, and severe muscle necrosis by a non-enzymatic mechanism. This is Myotoxin-2 from Crotalus viridis viridis (Prairie rattlesnake).